The following is a 282-amino-acid chain: Undecaprenyl-diphosphatase (282 aa).

The next 6 helical transmembrane spans lie at 90 to 110 (YWLGWYVIIGTIPICILGLVC), 121 to 141 (LWVVATALVAFSGVIAFAEYV), 165 to 185 (LALIPGVSRSGSTISAGLFLG), 194 to 214 (FGFLLAIPAVFASGLFSIPDA), 228 to 248 (QLLVATVIAFVVGLVAVSWLL), and 256 to 276 (LYWFVGYRIVVGVGVLILLAV).

The protein belongs to the UppP family.

The protein resides in the cell membrane. The enzyme catalyses di-trans,octa-cis-undecaprenyl diphosphate + H2O = di-trans,octa-cis-undecaprenyl phosphate + phosphate + H(+). In terms of biological role, catalyzes the dephosphorylation of undecaprenyl diphosphate (UPP). Confers resistance to bacitracin. In Mycobacterium leprae (strain Br4923), this protein is Undecaprenyl-diphosphatase.